We begin with the raw amino-acid sequence, 118 residues long: Large ribosomal subunit protein uL18 (118 aa).

The protein belongs to the universal ribosomal protein uL18 family. As to quaternary structure, part of the 50S ribosomal subunit; part of the 5S rRNA/L5/L18/L25 subcomplex. Contacts the 5S and 23S rRNAs.

Functionally, this is one of the proteins that bind and probably mediate the attachment of the 5S RNA into the large ribosomal subunit, where it forms part of the central protuberance. The polypeptide is Large ribosomal subunit protein uL18 (Rickettsia felis (strain ATCC VR-1525 / URRWXCal2) (Rickettsia azadi)).